The sequence spans 391 residues: Fructose-bisphosphate aldolase 3, chloroplastic (391 aa).

The N-terminal 40 residues, 1–40, are a transit peptide targeting the chloroplast; sequence MASASFVKPNTLSSPWIGQRSFAHTSASSSPPPRVSFAIR. Arg88 provides a ligand contact to substrate. Ser150 is modified (phosphoserine). Position 178 (Lys178) interacts with substrate. Residue Ser208 is modified to Phosphoserine. Glu218 serves as the catalytic Proton acceptor. The Schiff-base intermediate with dihydroxyacetone-P role is filled by Lys260. Residue 302 to 304 participates in substrate binding; the sequence is SGG. Residue Lys387 is modified to N6,N6,N6-trimethyllysine.

This sequence belongs to the class I fructose-bisphosphate aldolase family. Homotetramer. Can be trimethylated at Lys-387 by LSMT-L, but the trimethylation has no effect in vitro. Post-translationally, S-glutathionylated. In terms of tissue distribution, expressed in roots, and at low levels in rosettes leaves, cauline leaves, stems and flowers.

It localises to the plastid. The protein localises to the chloroplast. The protein resides in the plastoglobule. The catalysed reaction is beta-D-fructose 1,6-bisphosphate = D-glyceraldehyde 3-phosphate + dihydroxyacetone phosphate. It participates in carbohydrate degradation; glycolysis; D-glyceraldehyde 3-phosphate and glycerone phosphate from D-glucose: step 4/4. Plays a key role in glycolysis and gluconeogenesis. This is Fructose-bisphosphate aldolase 3, chloroplastic from Arabidopsis thaliana (Mouse-ear cress).